Consider the following 391-residue polypeptide: Steroid side-chain-cleaving aldolase (391 aa).

The active-site Proton acceptor is the Tyr294. The Proton donor role is filled by Tyr344.

The protein belongs to the thiolase-like superfamily. As to quaternary structure, homodimer. Interacts with the ChsH1/ChsH2 hydratase via the DUF35 C-terminal region of ChsH2 (ChsH2-DUF35).

It catalyses the reaction 17-hydroxy-3-oxochol-4-en-22-oyl-CoA = androst-4-ene-3,17-dione + propanoyl-CoA. In terms of biological role, probably involved in bile acid degradation. In vitro, when associated with the ChsH1/ChsH2 hydratase, catalyzes the retroaldol cleavage of 17-hydroxy-3-oxo-4-pregnene-20-carboxyl-CoA (17-HOPC-CoA), forming androst-4-ene-3,17-dione and propionyl-CoA. The in vivo substrate is probably a closely analogous bile acid degradation metabolite. The sequence is that of Steroid side-chain-cleaving aldolase from Thermomonospora curvata (strain ATCC 19995 / DSM 43183 / JCM 3096 / KCTC 9072 / NBRC 15933 / NCIMB 10081 / Henssen B9).